The sequence spans 353 residues: MSGNTLGTLFCVTNFGESHGPAIGCVVDGCPPGLPLEAADIQAELDRRRPGTSRHVTQRQEADQVEILSGVYEGVTTGTPIGLLIRNTDARSKDYSNIADTFRPGHADFAYWRKYGVRDPRGGGRSSARLTAPTVAAGAIAKKWLAGQFGVRVRGYMSQLGPIAIPFSSWDDVPGNAFYAPNAAVVPELEAYMDQLRRDGDSVGARIEVVAEGLPAGWGEPIYDRLDADIAHAMMGLNAVKGVSLGAGFESIAQRGSEHGDEITPEGFASNHAGGVLGGISTGQPITVSLAIKPTSSIRVERRSVNRAGEPVMVQTLGRHDPCVGIRATPIAEALLALVLIDHALRQRAQCGG.

Residues Arg-48 and Arg-54 each coordinate NADP(+). FMN contacts are provided by residues 125–127 (RSS), 238–239 (NA), Gly-278, 293–297 (KPTSS), and Arg-319.

Belongs to the chorismate synthase family. In terms of assembly, homotetramer. FMNH2 serves as cofactor.

The enzyme catalyses 5-O-(1-carboxyvinyl)-3-phosphoshikimate = chorismate + phosphate. Its pathway is metabolic intermediate biosynthesis; chorismate biosynthesis; chorismate from D-erythrose 4-phosphate and phosphoenolpyruvate: step 7/7. In terms of biological role, catalyzes the anti-1,4-elimination of the C-3 phosphate and the C-6 proR hydrogen from 5-enolpyruvylshikimate-3-phosphate (EPSP) to yield chorismate, which is the branch point compound that serves as the starting substrate for the three terminal pathways of aromatic amino acid biosynthesis. This reaction introduces a second double bond into the aromatic ring system. The sequence is that of Chorismate synthase from Bordetella bronchiseptica (strain ATCC BAA-588 / NCTC 13252 / RB50) (Alcaligenes bronchisepticus).